We begin with the raw amino-acid sequence, 333 residues long: Fructose-1,6-bisphosphatase class 1 (333 aa).

Positions 92, 113, 115, and 116 each coordinate Mg(2+). Residues 116–119 (DGSS), Asn209, Tyr242, and Lys272 each bind substrate. Glu278 lines the Mg(2+) pocket.

It belongs to the FBPase class 1 family. In terms of assembly, homotetramer. It depends on Mg(2+) as a cofactor.

The protein localises to the cytoplasm. The enzyme catalyses beta-D-fructose 1,6-bisphosphate + H2O = beta-D-fructose 6-phosphate + phosphate. It functions in the pathway carbohydrate biosynthesis; Calvin cycle. This chain is Fructose-1,6-bisphosphatase class 1, found in Pelodictyon phaeoclathratiforme (strain DSM 5477 / BU-1).